The sequence spans 1244 residues: Mitotic chromosome and X-chromosome-associated protein mix-1 (1244 aa).

Residue 32 to 39 participates in ATP binding; that stretch reads GYNGSGKS. Residues 247 to 355 adopt a coiled-coil conformation; that stretch reads VKKSAKEIED…AKRKEHEDSK (109 aa). The segment covering 337-355 has biased composition (basic and acidic residues); sequence LSKDREVLDAKRKEHEDSK. A disordered region spans residues 337 to 369; the sequence is LSKDREVLDAKRKEHEDSKAANSKDIQSQSDDE. The segment covering 356–365 has biased composition (polar residues); sequence AANSKDIQSQ. The stretch at 415–472 forms a coiled coil; it reads ITAAKKRGERLHNQIKHLEGEKATLSARSKSDIGSADNYQKEVDEINKQLQLLGFNID. Residues 526 to 654 enclose the SMC hinge domain; that stretch reads DVFGYVAHLI…DSLDVAREIA (129 aa). Coiled coils occupy residues 701–946 and 975–1037; these read PQIE…RKEA and YTVS…IATL. Positions 919 to 932 are enriched in basic and acidic residues; it reads AKTKSKREEKEKEL. The tract at residues 919-943 is disordered; it reads AKTKSKREEKEKELTSLQQSEASNR. The span at 1216-1232 shows a compositional bias: basic and acidic residues; the sequence is DAAAKKGAQKNDKEPPK. Positions 1216–1244 are disordered; that stretch reads DAAAKKGAQKNDKEPPKKKPIVVDDDDFE.

The protein belongs to the SMC family. SMC2 subfamily. In terms of assembly, component of the condensin I complex, which contains the mix-1/SMC2 and smc-4/SMC4 heterodimer, and three non SMC subunits that probably regulate the complex: dpy-26, capg-1 and dpy-28. Within the complex, interacts with smc-4, dpy-26, dpy-28 and capg-1. Interaction with smc-4 is required for mitotic chromosome localization. Component of the condensin II complex, which contains the mix-1/SMC2 and smc-4/SMC4 heterodimer, and three non SMC subunits, capg-2, kle-2 and hcp-6 that probably regulate the complex. Within the complex, interacts with smc-4, capg-2, kle-2 and hcp-6. Also a component of the condensin-like dosage compensation complex, which contains the mix-1/SMC2 and dpy-27/SMC4 heterodimer, and three non SMC subunits that probably regulate the complex: dpy-26, capg-1 and dpy-28. Within the complex, interacts with dpy-27, dpy-26, capg-1 and dpy-28. Requires capg-1 for hermaphrodite X chromosome localization. Interacts with smcl-1. In terms of tissue distribution, expressed in embryos and in adult somatic and germline tissues (at protein level).

The protein localises to the nucleus. Its subcellular location is the chromosome. In terms of biological role, essential protein required for both chromosome condensation and segregation and X-chromosome dosage compensation depending on its binding partners. Central component of the condensin I complex, a complex required for conversion of interphase chromatin into mitotic-like condense chromosomes. The condensin complex introduces positive supercoils into relaxed DNA in the presence of type I topoisomerases. Converts nicked DNA into positive knotted forms in the presence of type II topoisomerases. Central component of the condensin II complex, a complex that seems to play a role in prophase chromosome condensation and organization. Both the condensin complex I and II play a role in meiotic and mitotic chromosome segregation. Plays a role in robust cytokinesis upon the presence of chromatin obstructions. Also a member of the condensin I-like dosage compensation complex that associates specifically with hermaphrodite X chromosomes to reduce their gene transcription during interphase. In Caenorhabditis elegans, this protein is Mitotic chromosome and X-chromosome-associated protein mix-1 (mix-1).